The primary structure comprises 471 residues: Proline--tRNA ligase 2 (471 aa).

This sequence belongs to the class-II aminoacyl-tRNA synthetase family. ProS type 3 subfamily. Homodimer.

The protein resides in the cytoplasm. It carries out the reaction tRNA(Pro) + L-proline + ATP = L-prolyl-tRNA(Pro) + AMP + diphosphate. Catalyzes the attachment of proline to tRNA(Pro) in a two-step reaction: proline is first activated by ATP to form Pro-AMP and then transferred to the acceptor end of tRNA(Pro). This is Proline--tRNA ligase 2 from Streptomyces avermitilis (strain ATCC 31267 / DSM 46492 / JCM 5070 / NBRC 14893 / NCIMB 12804 / NRRL 8165 / MA-4680).